The chain runs to 1278 residues: Mediator of RNA polymerase II transcription subunit 16 (1278 aa).

Acidic residues predominate over residues 1-10; the sequence is MNQQNPEEEV. Disordered stretches follow at residues 1 to 21, 530 to 557, and 839 to 861; these read MNQQ…GGGI, TKDF…GDEK, and SAGT…SPAT. Over residues 547-557 the composition is skewed to basic and acidic residues; that stretch reads APKEPDSGDEK. Residues 841 to 861 show a composition bias toward polar residues; that stretch reads GTGSNRNNVTSPTQNASSPAT.

The protein belongs to the plant Mediator complex subunit 16 family. As to quaternary structure, component of the Mediator complex.

It localises to the nucleus. In terms of biological role, component of the Mediator complex, a coactivator involved in the regulated transcription of nearly all RNA polymerase II-dependent genes. Mediator functions as a bridge to convey information from gene-specific regulatory proteins to the basal RNA polymerase II transcription machinery. The Mediator complex, having a compact conformation in its free form, is recruited to promoters by direct interactions with regulatory proteins and serves for the assembly of a functional preinitiation complex with RNA polymerase II and the general transcription factors. Involved in the regulation of the circadian clock, in the control of flowering time, in freezing- and osmotic-stress tolerance and in both salicylic acid- and jasmonate-mediated defense gene expression. This chain is Mediator of RNA polymerase II transcription subunit 16 (MED16), found in Arabidopsis thaliana (Mouse-ear cress).